A 370-amino-acid chain; its full sequence is Putrescine-binding periplasmic protein PotF (370 aa).

An N-terminal signal peptide occupies residues 1–26; that stretch reads MTALNKKWLSGLVAGALMAVSVGTLA. Position 38 (serine 38) interacts with putrescine. A disulfide bridge connects residues cysteine 175 and cysteine 239. Putrescine-binding residues include aspartate 247 and aspartate 278.

It belongs to the bacterial solute-binding protein PotD/PotF family. In terms of assembly, the complex is composed of two ATP-binding proteins (PotG), two transmembrane proteins (PotH and PotI) and a solute-binding protein (PotF).

The protein localises to the periplasm. Transport is feedback inhibited by intracellular polyamines. Functionally, part of the ABC transporter complex PotFGHI involved in putrescine uptake. Binds putrescine. Imports putrescine for maintenance of the optimal concentration of polyamines necessary for cell growth in the presence of glucose. This is Putrescine-binding periplasmic protein PotF from Escherichia coli (strain K12).